Here is a 502-residue protein sequence, read N- to C-terminus: MEFSVKSGSPEKQRSACVVVGVFEPRRLSPVAEQLDKISDGYISSLLRRGDLEGKPGQMLLLHQVPGVLSERVLLVGCGKERELDERQYKQIINKTITTLNETGSMEAVCFLTELHVKGRDTYWKVRQAVETTKAGLYNFDQFKTNKAEPRRPLRKLVFNVPTRRELTIGEKAIAHGLAVAKGVRVCRDVANMPPNVCNPAYLASQARRLADSFDNITTKVIGEQEMAELGMNSYLAVARGSENEAMMAIIEYKGNADAKPIVLVGKGLTFDSGGISIKPAEGMDEMKYDMGGAASVLGTMHALAQLQLPINVIGVLAGCENMPGGNAYRPGDILTSMSGQTIEVLNTDAEGRLVLCDALTYVDRYDPETVIDVATLTGACIIALGHHTTGLLANHNPLAHELLNASEQAGDRAWRLPLFDEYQEQLESPFADMANIGGRPAGTITAAAFLSRFTKKYNWAHLDIAGTAWKSGKDKGSTGRPVPLLTQFLLNRAGVDIEEKE.

Mn(2+) is bound by residues K267 and D272. K279 is an active-site residue. Positions 290, 349, and 351 each coordinate Mn(2+). R353 is a catalytic residue.

The protein belongs to the peptidase M17 family. Mn(2+) is required as a cofactor.

It localises to the cytoplasm. The enzyme catalyses Release of an N-terminal amino acid, Xaa-|-Yaa-, in which Xaa is preferably Leu, but may be other amino acids including Pro although not Arg or Lys, and Yaa may be Pro. Amino acid amides and methyl esters are also readily hydrolyzed, but rates on arylamides are exceedingly low.. It catalyses the reaction Release of an N-terminal amino acid, preferentially leucine, but not glutamic or aspartic acids.. Presumably involved in the processing and regular turnover of intracellular proteins. Catalyzes the removal of unsubstituted N-terminal amino acids from various peptides. In Aeromonas salmonicida (strain A449), this protein is Probable cytosol aminopeptidase.